The chain runs to 230 residues: Small ribosomal subunit protein uS3c (230 aa).

One can recognise a KH type-2 domain in the interval 39-109 (IRSFIHSKLS…QLRVNVVEIA (71 aa)).

The protein belongs to the universal ribosomal protein uS3 family. In terms of assembly, part of the 30S ribosomal subunit.

It is found in the plastid. The protein localises to the chloroplast. The chain is Small ribosomal subunit protein uS3c (rps3) from Pyropia yezoensis (Susabi-nori).